Consider the following 442-residue polypeptide: Exodeoxyribonuclease 7 large subunit (442 aa).

The protein belongs to the XseA family. As to quaternary structure, heterooligomer composed of large and small subunits.

Its subcellular location is the cytoplasm. The enzyme catalyses Exonucleolytic cleavage in either 5'- to 3'- or 3'- to 5'-direction to yield nucleoside 5'-phosphates.. Functionally, bidirectionally degrades single-stranded DNA into large acid-insoluble oligonucleotides, which are then degraded further into small acid-soluble oligonucleotides. The sequence is that of Exodeoxyribonuclease 7 large subunit from Shewanella woodyi (strain ATCC 51908 / MS32).